The primary structure comprises 143 residues: uncharacterized protein (143 aa).

Residues M1–A32 form the signal peptide.

The protein to M.tuberculosis Rv1269c.

This is an uncharacterized protein from Mycobacterium tuberculosis (strain CDC 1551 / Oshkosh).